The following is an 862-amino-acid chain: DNA replication licensing factor MCM4 (862 aa).

Over residues 1 to 12 (MASRGGGGGGDG) the composition is skewed to gly residues. Residues 1-132 (MASRGGGGGG…GGGGGGAGAD (132 aa)) are disordered. 2 stretches are compositionally biased toward low complexity: residues 20-41 (SSPDVRPSSPLPATNSSPPQSG) and 52-64 (SASPYPSSPSLGG). The segment at 289-317 (CLVCGFYSEPVMVDRGRVTEPHICQKEQC) adopts a C4-type zinc-finger fold. The MCM domain occupies 453 to 659 (IYDRLTRSLA…QTDRRLAKHI (207 aa)). ATP is bound at residue 503–510 (GDPGTSKS). Residues 635-638 (SRFD) carry the Arginine finger motif.

Belongs to the MCM family. Component of the minichromosome maintenance (MCM) complex, a heterotetramer composed of MCM2, MCM3, MCM4, MCM5, MCM6 and MCM7.

It is found in the nucleus. The enzyme catalyses ATP + H2O = ADP + phosphate + H(+). Probable component of the MCM2-7 complex (MCM complex) that may function as a DNA helicase and which is essential to undergo a single round of replication initiation and elongation per cell cycle in eukaryotic cells. The protein is DNA replication licensing factor MCM4 (MCM4) of Oryza sativa subsp. japonica (Rice).